Here is a 474-residue protein sequence, read N- to C-terminus: PTS system N-acetylmuramic acid-specific EIIBC component (474 aa).

Positions 1 to 89 constitute a PTS EIIB type-1 domain; that stretch reads MAKEISSELL…SELLGEAPVQ (89 aa). The Cytoplasmic portion of the chain corresponds to 1–123; it reads MAKEISSELL…LAKFATIFTP (123 aa). C29 functions as the Phosphocysteine intermediate; for EIIB activity in the catalytic mechanism. One can recognise a PTS EIIC type-1 domain in the interval 115–474; sequence AKFATIFTPL…LFGCRNVNLD (360 aa). The helical transmembrane segment at 124–144 threads the bilayer; sequence LIPGFIAAGLLLGIATLIATV. The Periplasmic portion of the chain corresponds to 145–157; sequence MHVPADAQGTLPD. The helical transmembrane segment at 158 to 178 threads the bilayer; the sequence is ALNFMKVFSKGLFTFLVILVG. Residues 179–180 are Cytoplasmic-facing; the sequence is YN. Residues 181-201 form a helical membrane-spanning segment; that stretch reads AAQAFGGTGVNGAIIAALFLL. Residues 202–217 lie on the Periplasmic side of the membrane; sequence GYNPAATTGYYAGFHD. Residues 218–238 form a helical membrane-spanning segment; sequence FFGLPIDPRGNIIGVLIAAWA. The Cytoplasmic portion of the chain corresponds to 239-260; that stretch reads CARIEGMVRRFMPDDLDMLLTS. Residues 261 to 281 traverse the membrane as a helical segment; that stretch reads LITLLITATLAYLIIMPLGGW. The Periplasmic segment spans residues 282–301; sequence LFEGMSWLFMHLNSNPLGCA. Residues 302–322 traverse the membrane as a helical segment; it reads VLAGLFLIAVVFGVHQGFIPV. Over 323 to 334 the chain is Cytoplasmic; sequence YLALMDSQGFNS. A helical transmembrane segment spans residues 335 to 355; the sequence is LFPILSMAGAGQVGAALALYW. Topologically, residues 356–368 are periplasmic; the sequence is RAQPHSGLRSQVR. Residues 369 to 389 form a helical membrane-spanning segment; it reads GAIIPGLLGVGEPLIYGVTLP. Residues 390-393 are Cytoplasmic-facing; it reads RMKP. The chain crosses the membrane as a helical span at residues 394 to 414; it reads FITACLGGAAGGLFIGLIAWW. Residues 415–440 lie on the Periplasmic side of the membrane; that stretch reads GLPMGLNSAFGPSGLVALPLMTSAQG. The chain crosses the membrane as a helical span at residues 441 to 461; that stretch reads ILPAMAIYAGGILVAWVCGFI. The Cytoplasmic segment spans residues 462–474; that stretch reads FTTLFGCRNVNLD.

It is found in the cell inner membrane. It carries out the reaction N-acetyl-beta-D-muramate(out) + N(pros)-phospho-L-histidyl-[protein] = N-acetyl-beta-D-muramate 6-phosphate(in) + L-histidyl-[protein]. Its function is as follows. The phosphoenolpyruvate-dependent sugar phosphotransferase system (sugar PTS), a major carbohydrate active transport system, catalyzes the phosphorylation of incoming sugar substrates concomitantly with their translocation across the cell membrane. This system is involved in N-acetylmuramic acid (MurNAc) transport, yielding cytoplasmic MurNAc-6-P. Is also able to take up anhydro-N-acetylmuramic acid (anhMurNAc), but cannot phosphorylate the carbon 6, probably because of the 1,6-anhydro ring. This chain is PTS system N-acetylmuramic acid-specific EIIBC component (murP), found in Shigella dysenteriae serotype 1 (strain Sd197).